A 176-amino-acid polypeptide reads, in one-letter code: Japanin-like-RS (176 aa).

Residues 1–24 (MKVLLCLVCSFYIIVSSITTMTTG) form the signal peptide. 2 disulfides stabilise this stretch: cysteine 52–cysteine 174 and cysteine 138–cysteine 162. Asparagine 155 is a glycosylation site (N-linked (GlcNAc...) asparagine).

This sequence belongs to the calycin superfamily. Lipocalin family. As to quaternary structure, homodimer; non-disulfide-linked. Each monomer accommodates one molecule of cholesterol in a pocket. In terms of tissue distribution, expressed in salivary glands.

It localises to the secreted. Functionally, salivary tick protein that modulates host immune response. This protein blocks dendritic cell (DC) differentiation from monocytes. In addition, it inhibits up-regulation of costimulatory molecules and pro-inflammatory cytokines in response to stimuli and promotes up-regulation of co-inhibitory molecules and the anti-inflammatory cytokine interleukin-10. It has a pocket to accomodate cholesterol, which may have immune-modulatory roles, either directly or through interactions with the host gut microbiota. The polypeptide is Japanin-like-RS (Rhipicephalus sanguineus (Brown dog tick)).